The sequence spans 255 residues: Type III pantothenate kinase (255 aa).

7–14 (DVGNTRLK) lines the ATP pocket. Substrate-binding positions include Tyr96 and 103–106 (GADR). The active-site Proton acceptor is the Asp105. Position 133 (Thr133) interacts with ATP. Residue Thr183 coordinates substrate.

Belongs to the type III pantothenate kinase family. In terms of assembly, homodimer. Requires NH4(+) as cofactor. The cofactor is K(+).

It localises to the cytoplasm. It carries out the reaction (R)-pantothenate + ATP = (R)-4'-phosphopantothenate + ADP + H(+). It participates in cofactor biosynthesis; coenzyme A biosynthesis; CoA from (R)-pantothenate: step 1/5. Catalyzes the phosphorylation of pantothenate (Pan), the first step in CoA biosynthesis. In Polaromonas sp. (strain JS666 / ATCC BAA-500), this protein is Type III pantothenate kinase.